Consider the following 482-residue polypeptide: ATP synthase subunit beta (482 aa).

Residue 162 to 169 (GGAGVGKT) participates in ATP binding.

Belongs to the ATPase alpha/beta chains family. As to quaternary structure, F-type ATPases have 2 components, CF(1) - the catalytic core - and CF(0) - the membrane proton channel. CF(1) has five subunits: alpha(3), beta(3), gamma(1), delta(1), epsilon(1). CF(0) has four main subunits: a(1), b(1), b'(1) and c(9-12).

The protein resides in the cellular thylakoid membrane. It carries out the reaction ATP + H2O + 4 H(+)(in) = ADP + phosphate + 5 H(+)(out). Functionally, produces ATP from ADP in the presence of a proton gradient across the membrane. The catalytic sites are hosted primarily by the beta subunits. The chain is ATP synthase subunit beta from Nostoc sp. (strain PCC 7120 / SAG 25.82 / UTEX 2576).